Here is a 312-residue protein sequence, read N- to C-terminus: tRNA dimethylallyltransferase (312 aa).

17 to 24 (GPTASGKT) lines the ATP pocket. 19 to 24 (TASGKT) serves as a coordination point for substrate. Interaction with substrate tRNA stretches follow at residues 42-45 (DSAL), 166-170 (QRLLR), and 247-252 (RCVGYR).

The protein belongs to the IPP transferase family. As to quaternary structure, monomer. It depends on Mg(2+) as a cofactor.

It carries out the reaction adenosine(37) in tRNA + dimethylallyl diphosphate = N(6)-dimethylallyladenosine(37) in tRNA + diphosphate. In terms of biological role, catalyzes the transfer of a dimethylallyl group onto the adenine at position 37 in tRNAs that read codons beginning with uridine, leading to the formation of N6-(dimethylallyl)adenosine (i(6)A). In Sodalis glossinidius (strain morsitans), this protein is tRNA dimethylallyltransferase.